Here is a 359-residue protein sequence, read N- to C-terminus: GTP cyclohydrolase FolE2 (359 aa).

The protein belongs to the GTP cyclohydrolase IV family.

It catalyses the reaction GTP + H2O = 7,8-dihydroneopterin 3'-triphosphate + formate + H(+). It functions in the pathway cofactor biosynthesis; 7,8-dihydroneopterin triphosphate biosynthesis; 7,8-dihydroneopterin triphosphate from GTP: step 1/1. Converts GTP to 7,8-dihydroneopterin triphosphate. In Cereibacter sphaeroides (strain ATCC 17029 / ATH 2.4.9) (Rhodobacter sphaeroides), this protein is GTP cyclohydrolase FolE2.